A 732-amino-acid polypeptide reads, in one-letter code: E3 ubiquitin-protein ligase RNF19B (732 aa).

Residues 1 to 109 (MGSEKDSESP…PEEDEAAEGG (109 aa)) are disordered. Positions 1–315 (MGSEKDSESP…VCGCEFCWLC (315 aa)) are required for ubiquitin ligase activity and for protection against staurosporin-induced cell death. Pro residues predominate over residues 54-71 (AEPPPPAAPPPPPPPAPA). Low complexity predominate over residues 72-99 (PVEAQAPPVEALPSEPAAEAEAEAVAAG). A compositionally biased stretch (acidic residues) spans 100-109 (PEEDEAAEGG). The segment at 112-334 (EEVECPLCLV…LSPSGCTFWG (223 aa)) is TRIAD supradomain. Zn(2+) contacts are provided by Cys116, Cys119, Cys139, Cys142, Cys203, Cys208, Cys225, Cys230, Cys235, Cys238, His243, Cys248, Cys284, and Cys287. The RING-type 1 zinc finger occupies 116–165 (CPLCLVRLPPERAPRLLSCPHRSCRDCLRHYLRLEISESRVPISCPECSE). The IBR-type zinc-finger motif lies at 183–248 (HKYEEFMLRR…KQIWHPNQTC (66 aa)). Residues 284-315 (CPRCSAYIIKMNDGSCNHMTCAVCGCEFCWLC) form an RING-type 2; atypical zinc finger. Residue Cys299 is part of the active site. Cys304, Cys307, Cys312, Cys315, His323, and Cys330 together coordinate Zn(2+). 2 consecutive transmembrane segments (helical) span residues 351-371 (LIGA…AMVI) and 412-432 (VIAA…VYGV). Disordered stretches follow at residues 598 to 644 (QLVS…QSCE) and 660 to 732 (QPES…YEVE). Residues 674 to 683 (QSDDVPDITS) show a composition bias toward acidic residues.

The protein belongs to the RBR family. RNF19 subfamily. In terms of assembly, interacts with UBE2L3, UBE2L6 and UCKL1. Expressed specifically in natural killer cells, activated macrophages and cytotoxic T-cells. Present in macrophages (at protein level). Ubiquitously expressed with high expression in testis.

It localises to the cytoplasmic granule membrane. It is found in the endoplasmic reticulum membrane. The enzyme catalyses [E2 ubiquitin-conjugating enzyme]-S-ubiquitinyl-L-cysteine + [acceptor protein]-L-lysine = [E2 ubiquitin-conjugating enzyme]-L-cysteine + [acceptor protein]-N(6)-ubiquitinyl-L-lysine.. It participates in protein modification; protein ubiquitination. Functionally, E3 ubiquitin-protein ligase which accepts ubiquitin from E2 ubiquitin-conjugating enzymes UBE2L3 and UBE2L6 in the form of a thioester and then directly transfers the ubiquitin to targeted substrates, such as UCKL1. Involved in the cytolytic activity of natural killer cells and cytotoxic T-cells. Protects against staurosporin-induced cell death. In Mus musculus (Mouse), this protein is E3 ubiquitin-protein ligase RNF19B (Rnf19b).